We begin with the raw amino-acid sequence, 313 residues long: Formimidoylglutamase (313 aa).

His130, Asp155, His157, Asp159, Asp241, and Asp243 together coordinate Mn(2+).

Belongs to the arginase family. It depends on Mn(2+) as a cofactor.

The enzyme catalyses N-formimidoyl-L-glutamate + H2O = formamide + L-glutamate. Its pathway is amino-acid degradation; L-histidine degradation into L-glutamate; L-glutamate from N-formimidoyl-L-glutamate (hydrolase route): step 1/1. In terms of biological role, catalyzes the conversion of N-formimidoyl-L-glutamate to L-glutamate and formamide. The protein is Formimidoylglutamase of Salmonella paratyphi A (strain ATCC 9150 / SARB42).